The chain runs to 636 residues: Threonine--tRNA ligase (636 aa).

Positions 1–63 (MINITTSFPN…SKDGSVDPVT (63 aa)) constitute a TGS domain. A catalytic region spans residues 244–535 (DHRKIAKDLG…LIEHYAGNIP (292 aa)). 3 residues coordinate Zn(2+): C335, H386, and H512.

Belongs to the class-II aminoacyl-tRNA synthetase family. In terms of assembly, homodimer. The cofactor is Zn(2+).

The protein localises to the cytoplasm. The enzyme catalyses tRNA(Thr) + L-threonine + ATP = L-threonyl-tRNA(Thr) + AMP + diphosphate + H(+). Its function is as follows. Catalyzes the attachment of threonine to tRNA(Thr) in a two-step reaction: L-threonine is first activated by ATP to form Thr-AMP and then transferred to the acceptor end of tRNA(Thr). Also edits incorrectly charged L-seryl-tRNA(Thr). In Anaplasma marginale (strain Florida), this protein is Threonine--tRNA ligase.